A 489-amino-acid chain; its full sequence is Cytochrome P450 monooxygenase trt6 (489 aa).

The helical transmembrane segment at Ser-10 to Ser-30 threads the bilayer. 2 N-linked (GlcNAc...) asparagine glycosylation sites follow: Asn-364 and Asn-407. Heme is bound at residue Cys-430.

Belongs to the cytochrome P450 family. The cofactor is heme.

The protein resides in the membrane. It participates in secondary metabolite biosynthesis; terpenoid biosynthesis. Cytochrome P450 monooxygenase; part of the gene cluster that mediates the biosynthesis of terretonin, a fungal meroterpenoid that acts as a mycotoxin. The first step of the pathway is the synthesis of 3,5-dimethylorsellinic acid (DMOA) by the polyketide synthase trt4. DMOA is then prenylated into farnesyl-DMOA by the polyprenyl transferase trt2. Methylation by the methyltransferase trt5 then leads to farnesyl-DMOA methyl ester which is further subject to epoxidation by the FAD-dependent monooxygenase trt8 to yield epoxyfarnesyl-DMOA methyl ester. Cyclization of epoxyfarnesyl-DMOA methyl ester by the terpene cyclase trt1 leads to a tetracycle intermediate which is in turn converted to preterretonin. Dehydrogenase trt9 comes next to transform preterretonin to preterrenoid. The FAD-dependent monooxygenase trt3 is then required for the C-hydroxylation at C16 of preterrenoid to yield terrenoid. The cytochrome P450 trt6 catalyzes three successive oxidations to transform terrenoid into an unstable intermediate, which then undergoes the D-ring expansion and unusual rearrangement of the methoxy group to afford the core skeleton of terretonin. Trt14 catalyzes the D-ring expansion of terretonin involving intramolecular methoxy rearrangement as well as the hydrolysis of the expanded D-ring and the methyl ester moiety. Finally, the nonheme iron-dependent dioxygenase trt7 accomplishes the last two oxidation reactions steps to complete the biosynthesis of terretonin. Terretonin C is produced via spontaneous decarboxylation of the terretonin precursor. Another shunt product of the terretonin biosynthesis is dihydrofarnesyl-DMOA, derived from epoxyfarnesyl-DMOA through hydrolysis of the epoxide. This Aspergillus terreus (strain NIH 2624 / FGSC A1156) protein is Cytochrome P450 monooxygenase trt6.